The sequence spans 412 residues: ATP phosphoribosyltransferase regulatory subunit (412 aa).

It belongs to the class-II aminoacyl-tRNA synthetase family. HisZ subfamily. Heteromultimer composed of HisG and HisZ subunits.

The protein localises to the cytoplasm. It functions in the pathway amino-acid biosynthesis; L-histidine biosynthesis; L-histidine from 5-phospho-alpha-D-ribose 1-diphosphate: step 1/9. In terms of biological role, required for the first step of histidine biosynthesis. May allow the feedback regulation of ATP phosphoribosyltransferase activity by histidine. The sequence is that of ATP phosphoribosyltransferase regulatory subunit from Dehalococcoides mccartyi (strain ATCC BAA-2266 / KCTC 15142 / 195) (Dehalococcoides ethenogenes (strain 195)).